The sequence spans 217 residues: Adenylate kinase (217 aa).

Position 10 to 15 (10 to 15) interacts with ATP; sequence GAGKGT. An NMP region spans residues 30 to 59; sequence STGDIFRKNVADDTPLGRLAKQYMDAGDLV. AMP is bound by residues T31, R36, 57-59, 85-88, and Q92; these read DLV and GFPR. The segment at 126–163 is LID; that stretch reads GRRTCADCAHVWHVTYDPPTVDGVCDLCGGKLFQREDD. Residue R127 participates in ATP binding. The Zn(2+) site is built by C130, C133, C150, and C153. R160 and R171 together coordinate AMP. ATP is bound at residue G199.

The protein belongs to the adenylate kinase family. In terms of assembly, monomer.

The protein resides in the cytoplasm. It carries out the reaction AMP + ATP = 2 ADP. Its pathway is purine metabolism; AMP biosynthesis via salvage pathway; AMP from ADP: step 1/1. Catalyzes the reversible transfer of the terminal phosphate group between ATP and AMP. Plays an important role in cellular energy homeostasis and in adenine nucleotide metabolism. This chain is Adenylate kinase, found in Acidothermus cellulolyticus (strain ATCC 43068 / DSM 8971 / 11B).